Here is a 344-residue protein sequence, read N- to C-terminus: Tripartite motif-containing protein 44 (344 aa).

The disordered stretch occupies residues 69–165; sequence PPASGDDALP…ETEAESEFDP (97 aa). Positions 88 to 165 are enriched in acidic residues; it reads EGEVESEVGE…ETEAESEFDP (78 aa). The B box-type zinc-finger motif lies at 174–215; the sequence is VAKRKCPDHGLDLSTYCQEDRQLICVLCPVIGAHRGHQLSTL. Zn(2+) contacts are provided by Cys-179, His-182, Cys-201, and His-207. The stretch at 290-325 forms a coiled coil; that stretch reads AHVTEILADIQSHMDRLMTQMAQAKEQLDTSNESAE. Positions 309 to 344 are disordered; sequence QMAQAKEQLDTSNESAEPKAEGDEEGPSGASEEEDT. Residues 330-344 are compositionally biased toward acidic residues; it reads GDEEGPSGASEEEDT. A phosphoserine mark is found at Ser-336 and Ser-339.

As to quaternary structure, interacts (via coiled coil) with TRIM17 (via coiled coil).

Its function is as follows. May play a role in the process of differentiation and maturation of neuronal cells. May regulate the activity of TRIM17. Is a negative regulator of PAX6 expression. In Rattus norvegicus (Rat), this protein is Tripartite motif-containing protein 44 (Trim44).